Consider the following 144-residue polypeptide: uncharacterized protein (144 aa).

A signal peptide spans 1-22 (MCTDVAFFSLDCLATWLGGVCS).

This is an uncharacterized protein from Saccharomyces cerevisiae (strain ATCC 204508 / S288c) (Baker's yeast).